The following is a 310-amino-acid chain: Glycine--tRNA ligase alpha subunit (310 aa).

This sequence belongs to the class-II aminoacyl-tRNA synthetase family. In terms of assembly, tetramer of two alpha and two beta subunits.

The protein localises to the cytoplasm. The enzyme catalyses tRNA(Gly) + glycine + ATP = glycyl-tRNA(Gly) + AMP + diphosphate. The sequence is that of Glycine--tRNA ligase alpha subunit from Aliivibrio salmonicida (strain LFI1238) (Vibrio salmonicida (strain LFI1238)).